The chain runs to 118 residues: Holo-[acyl-carrier-protein] synthase (118 aa).

The Mg(2+) site is built by D8 and E58.

This sequence belongs to the P-Pant transferase superfamily. AcpS family. It depends on Mg(2+) as a cofactor.

Its subcellular location is the cytoplasm. The enzyme catalyses apo-[ACP] + CoA = holo-[ACP] + adenosine 3',5'-bisphosphate + H(+). Its function is as follows. Transfers the 4'-phosphopantetheine moiety from coenzyme A to a Ser of acyl-carrier-protein. The sequence is that of Holo-[acyl-carrier-protein] synthase from Streptococcus equi subsp. zooepidemicus (strain MGCS10565).